Consider the following 197-residue polypeptide: Protein Hikeshi (197 aa).

Residues 18–55 are required for F-X-F-G repeats-nucleoporins recognition and nuclear import; it reads VAEDKFVFDLPDYESINHVVVFMLGTIPFPEGMGGSVY. A flexible linker region involved in nuclear import of HSP70 proteins region spans residues 124–134; the sequence is QTPVGNAAVSS.

The protein belongs to the OPI10 family. In terms of assembly, forms an asymmetric homodimer; required for binding and nuclear import of HSP70 proteins. Interacts with ATP-bound HSP70 proteins. Interacts with NUP62 and NUP153 (via F-X-F-G repeats). Interacts with HSPA8.

Its subcellular location is the cytoplasm. It localises to the cytosol. The protein resides in the nucleus. Its function is as follows. Acts as a specific nuclear import carrier for HSP70 proteins following heat-shock stress: acts by mediating the nucleoporin-dependent translocation of ATP-bound HSP70 proteins into the nucleus. HSP70 proteins import is required to protect cells from heat shock damages. Does not translocate ADP-bound HSP70 proteins into the nucleus. This Homo sapiens (Human) protein is Protein Hikeshi.